Here is a 146-residue protein sequence, read N- to C-terminus: Large ribosomal subunit protein uL15 (146 aa).

Residues 1–53 are disordered; it reads MILSNLKPVPGARHSKKRLGRGPGSGTGKTSGKGHKGQKARSGGGVRPGFEGG. Composition is skewed to gly residues over residues 21–31 and 42–52; these read RGPGSGTGKTS and SGGGVRPGFEG.

It belongs to the universal ribosomal protein uL15 family. As to quaternary structure, part of the 50S ribosomal subunit.

Its function is as follows. Binds to the 23S rRNA. This Acholeplasma laidlawii (strain PG-8A) protein is Large ribosomal subunit protein uL15.